A 368-amino-acid polypeptide reads, in one-letter code: MLYYFLRYINEMFNPPGMRVIEYLTFRASAAAITALLITVFAGPSFIRFLKSHFLEPVKEEAPEEHRKKKDVPTMGGLLIILAVEISALLWAKVDDPHVWLIMLAVLWMGLIGFIDDYRKVVLKIKGGLAGKYKLVGQVALGLVVGFYTWNDPAFSVLLSKTSVPFLKNFSVDYGIFYIPVVIFIITAVSNAVNLTDGLDGLAAGNAAIVTMALGLFAYLGGNAVYAGYLSIPFISGAGEIAVVSMAIVMACVGFLWFNSNPAEVFMGDTGSLALGSAIAVIALMIKQELLLPVLAGIFFIETLSVSMQVAWFKFTKWRFKEGRRIFLMAPLHHHFQLKGWPEQKIVIRFWIISILLFLTSLMTLKLR.

9 consecutive transmembrane segments (helical) span residues 30-50, 72-92, 98-118, 139-159, 170-190, 201-221, 238-258, 262-284, and 345-365; these read AAAI…IRFL, VPTM…LLWA, HVWL…IDDY, VALG…SVLL, FSVD…TAVS, GLAA…AYLG, AGEI…FLWF, PAEV…VIAL, and KIVI…LMTL.

It belongs to the glycosyltransferase 4 family. MraY subfamily. It depends on Mg(2+) as a cofactor.

It localises to the cell inner membrane. The catalysed reaction is UDP-N-acetyl-alpha-D-muramoyl-L-alanyl-gamma-D-glutamyl-meso-2,6-diaminopimeloyl-D-alanyl-D-alanine + di-trans,octa-cis-undecaprenyl phosphate = di-trans,octa-cis-undecaprenyl diphospho-N-acetyl-alpha-D-muramoyl-L-alanyl-D-glutamyl-meso-2,6-diaminopimeloyl-D-alanyl-D-alanine + UMP. Its pathway is cell wall biogenesis; peptidoglycan biosynthesis. Functionally, catalyzes the initial step of the lipid cycle reactions in the biosynthesis of the cell wall peptidoglycan: transfers peptidoglycan precursor phospho-MurNAc-pentapeptide from UDP-MurNAc-pentapeptide onto the lipid carrier undecaprenyl phosphate, yielding undecaprenyl-pyrophosphoryl-MurNAc-pentapeptide, known as lipid I. This chain is Phospho-N-acetylmuramoyl-pentapeptide-transferase, found in Chlorobaculum parvum (strain DSM 263 / NCIMB 8327) (Chlorobium vibrioforme subsp. thiosulfatophilum).